We begin with the raw amino-acid sequence, 132 residues long: Ribosome-binding factor A (132 aa).

Belongs to the RbfA family. Monomer. Binds 30S ribosomal subunits, but not 50S ribosomal subunits or 70S ribosomes.

It is found in the cytoplasm. In terms of biological role, one of several proteins that assist in the late maturation steps of the functional core of the 30S ribosomal subunit. Associates with free 30S ribosomal subunits (but not with 30S subunits that are part of 70S ribosomes or polysomes). Required for efficient processing of 16S rRNA. May interact with the 5'-terminal helix region of 16S rRNA. The protein is Ribosome-binding factor A of Pseudomonas entomophila (strain L48).